Here is a 178-residue protein sequence, read N- to C-terminus: Gamma-crystallin S (178 aa).

N-acetylserine is present on S2. Residues 2–5 are N-terminal arm; that stretch reads SKTG. Beta/gamma crystallin 'Greek key' domains follow at residues 6–44 and 45–87; these read GKIS…RVEG and GTWA…RAVH. Positions 88 to 93 are connecting peptide; sequence LSSGGQ. Beta/gamma crystallin 'Greek key' domains lie at 94–134 and 135–177; these read AKIQ…KVVE and GTWI…RRIV.

This sequence belongs to the beta/gamma-crystallin family. As to quaternary structure, monomer.

In terms of biological role, crystallins are the dominant structural components of the vertebrate eye lens. The protein is Gamma-crystallin S (Crygs) of Mus musculus (Mouse).